The following is a 418-amino-acid chain: Argininosuccinate synthase (418 aa).

Residues 14-22 (AYSGGLDTS) and Ala-42 each bind ATP. Positions 94 and 99 each coordinate L-citrulline. Gly-124 provides a ligand contact to ATP. L-aspartate-binding residues include Thr-126, Asn-130, and Asp-131. Asn-130 provides a ligand contact to L-citrulline. Residues Arg-134, Ser-183, Ser-192, Glu-273, and Tyr-285 each contribute to the L-citrulline site.

Belongs to the argininosuccinate synthase family. Type 1 subfamily. Homotetramer.

The protein resides in the cytoplasm. It carries out the reaction L-citrulline + L-aspartate + ATP = 2-(N(omega)-L-arginino)succinate + AMP + diphosphate + H(+). Its pathway is amino-acid biosynthesis; L-arginine biosynthesis; L-arginine from L-ornithine and carbamoyl phosphate: step 2/3. The chain is Argininosuccinate synthase from Colwellia psychrerythraea (strain 34H / ATCC BAA-681) (Vibrio psychroerythus).